The primary structure comprises 202 residues: Proteasome subunit beta 1 (202 aa).

Met1 is a propeptide (removed in mature form; by autocatalysis). Thr2 acts as the Nucleophile in catalysis.

The protein belongs to the peptidase T1B family. The 20S proteasome core is composed of 14 alpha and 14 beta subunits that assemble into four stacked heptameric rings, resulting in a barrel-shaped structure. The two inner rings, each composed of seven catalytic beta subunits, are sandwiched by two outer rings, each composed of seven alpha subunits. The catalytic chamber with the active sites is on the inside of the barrel. Has a gated structure, the ends of the cylinder being occluded by the N-termini of the alpha-subunits. Is capped at one or both ends by the proteasome regulatory ATPase, PAN.

Its subcellular location is the cytoplasm. The catalysed reaction is Cleavage of peptide bonds with very broad specificity.. With respect to regulation, the formation of the proteasomal ATPase PAN-20S proteasome complex, via the docking of the C-termini of PAN into the intersubunit pockets in the alpha-rings, triggers opening of the gate for substrate entry. Interconversion between the open-gate and close-gate conformations leads to a dynamic regulation of the 20S proteasome proteolysis activity. Functionally, component of the proteasome core, a large protease complex with broad specificity involved in protein degradation. The protein is Proteasome subunit beta 1 of Pyrobaculum aerophilum (strain ATCC 51768 / DSM 7523 / JCM 9630 / CIP 104966 / NBRC 100827 / IM2).